Consider the following 296-residue polypeptide: Porphobilinogen deaminase (296 aa).

At C232 the chain carries S-(dipyrrolylmethanemethyl)cysteine.

Belongs to the HMBS family. As to quaternary structure, monomer. Requires dipyrromethane as cofactor.

The catalysed reaction is 4 porphobilinogen + H2O = hydroxymethylbilane + 4 NH4(+). The protein operates within porphyrin-containing compound metabolism; protoporphyrin-IX biosynthesis; coproporphyrinogen-III from 5-aminolevulinate: step 2/4. Functionally, tetrapolymerization of the monopyrrole PBG into the hydroxymethylbilane pre-uroporphyrinogen in several discrete steps. In Corynebacterium aurimucosum (strain ATCC 700975 / DSM 44827 / CIP 107346 / CN-1) (Corynebacterium nigricans), this protein is Porphobilinogen deaminase.